A 218-amino-acid chain; its full sequence is MGQKVNPIGIRLGIIKDWNSKWFAGKRYAEFLIQDIKLRSDLKKKLMAAAVSKILIERPANNAVVTILTARPGVIIGKKGGGIETLRKEISDSLGVPVHLNIEEVKKPELDATLVAEGIAQQLEQRVMFRRAMKRAVTSALKAGAKGIKICVSGRLGGAEIARSEWYREGRVPLHTFRADIDYGTAESKTTYGIIGVKVWIFKGEILPQKKRSTESAQ.

A KH type-2 domain is found at 38–106 (LRSDLKKKLM…PVHLNIEEVK (69 aa)).

The protein belongs to the universal ribosomal protein uS3 family. In terms of assembly, part of the 30S ribosomal subunit. Forms a tight complex with proteins S10 and S14.

Functionally, binds the lower part of the 30S subunit head. Binds mRNA in the 70S ribosome, positioning it for translation. The protein is Small ribosomal subunit protein uS3 of Legionella pneumophila (strain Lens).